A 1238-amino-acid polypeptide reads, in one-letter code: ATP-dependent helicase/nuclease subunit A (1238 aa).

The UvrD-like helicase ATP-binding domain occupies 6-474 (TKWTETQKSA…IKLSENFRSR (469 aa)). 27-34 (AGAGTGKT) lines the ATP pocket. The 300-residue stretch at 512–811 (PFEGNCGGDV…RIMSIHKSKG (300 aa)) folds into the UvrD-like helicase C-terminal domain.

This sequence belongs to the helicase family. AddA subfamily. Heterodimer of AddA and AddB/RexB. Mg(2+) is required as a cofactor.

It catalyses the reaction Couples ATP hydrolysis with the unwinding of duplex DNA by translocating in the 3'-5' direction.. The catalysed reaction is ATP + H2O = ADP + phosphate + H(+). In terms of biological role, the heterodimer acts as both an ATP-dependent DNA helicase and an ATP-dependent, dual-direction single-stranded exonuclease. Recognizes the chi site generating a DNA molecule suitable for the initiation of homologous recombination. The AddA nuclease domain is required for chi fragment generation; this subunit has the helicase and 3' -&gt; 5' nuclease activities. The chain is ATP-dependent helicase/nuclease subunit A from Clostridium kluyveri (strain NBRC 12016).